The chain runs to 129 residues: Small ribosomal subunit protein uS11 (129 aa).

Belongs to the universal ribosomal protein uS11 family. In terms of assembly, part of the 30S ribosomal subunit. Interacts with proteins S7 and S18. Binds to IF-3.

In terms of biological role, located on the platform of the 30S subunit, it bridges several disparate RNA helices of the 16S rRNA. Forms part of the Shine-Dalgarno cleft in the 70S ribosome. The protein is Small ribosomal subunit protein uS11 of Pectobacterium atrosepticum (strain SCRI 1043 / ATCC BAA-672) (Erwinia carotovora subsp. atroseptica).